The chain runs to 325 residues: Protein ORANGE-ORANGE, chloroplastic (325 aa).

Residues 1–54 constitute a chloroplast transit peptide; the sequence is MDRVLVASYPINHLIRPHSFRIDYCWSTCFTSRLNSGKERQKLSSRWRWRSMAS. Residues 53–71 are compositionally biased toward low complexity; the sequence is ASDSTDSSSSSSFAPSVES. Positions 53 to 77 are disordered; it reads ASDSTDSSSSSSFAPSVESDPSDKT. The next 2 membrane-spanning stretches (helical) occupy residues 164–184 and 217–237; these read LYYVTCYSLIAGIILFGGLLA and IVASFSGGAVGVISALMVVEV. The CR-type-like stretch occupies residues 226–317; sequence VGVISALMVV…CTGMAMASEH (92 aa). One copy of the CXXCXGXG motif repeat lies at 248–255; sequence CKYCLGTG. One copy of the CXXCXXXG motif repeat lies at 259-266; the sequence is CARCSNTG. The stretch at 292-299 is one CXXCXGXG motif repeat; the sequence is CQNCSGSG. The CXXCXXXG motif repeat unit spans residues 303–310; sequence CPTCLCTG.

It belongs to the orange-like family.

Its subcellular location is the plastid. It is found in the chloroplast membrane. Triggers accumulation of carotenoids, mainly beta-carotene, in fruit flesh. This chain is Protein ORANGE-ORANGE, chloroplastic, found in Cucumis melo (Muskmelon).